The chain runs to 211 residues: HTH-type transcriptional regulator AlkX (211 aa).

The region spanning 22–82 is the HTH tetR-type domain; it reads ALLRDSVLDA…GYALRLADRL (61 aa). Residues 45–64 constitute a DNA-binding region (H-T-H motif); that stretch reads TLSDVARAAGISRQTIYNEF.

In terms of assembly, homodimer.

It is found in the cytoplasm. DNA-binding activity may be regulated by fatty acids. In terms of biological role, represses the expression of the alkB-rubAB operon, which encodes the alkane hydroxylase AlkB and the rubredoxins RubA and RubB. Acts by binding to the promoter region of the operon. In addition, EMSA analysis show that AlkX can bind to the promoter region of mmpS1 and mmpL3 and to the intragenic region of mmpL11, suggesting that it may participate in the regulatory network that controls the expression of MmpL lipid transporters. In Mycobacterium tuberculosis (strain ATCC 25618 / H37Rv), this protein is HTH-type transcriptional regulator AlkX.